We begin with the raw amino-acid sequence, 87 residues long: Beta-toxin CsE3 (87 aa).

The first 19 residues, 1-19 (MNSLLIIAACLALIGTVWA), serve as a signal peptide directing secretion. The region spanning 20 to 85 (KEGYIVNYHT…VWPLPKKKCN (66 aa)) is the LCN-type CS-alpha/beta domain. 4 disulfides stabilise this stretch: Cys-31–Cys-84, Cys-35–Cys-60, Cys-44–Cys-65, and Cys-48–Cys-67. At Asn-85 the chain carries Asparagine amide.

Belongs to the long (4 C-C) scorpion toxin superfamily. Sodium channel inhibitor family. Beta subfamily. Expressed by the venom gland.

The protein resides in the secreted. In terms of biological role, beta toxins bind voltage-independently at site-4 of sodium channels (Nav) and shift the voltage of activation toward more negative potentials thereby affecting sodium channel activation and promoting spontaneous and repetitive firing. This is Beta-toxin CsE3 from Centruroides sculpturatus (Arizona bark scorpion).